The sequence spans 179 residues: Transcription initiation factor TFIID subunit 10 (179 aa).

Residues 1–23 (MNDPEQYEPSSSTESVLMPPPAL) form a disordered region.

It belongs to the TAF10 family. In terms of assembly, component of the TFIID basal transcription factor complex, composed of TATA-box-binding protein tbp-1, and a number of TBP-associated factors (TAFs).

The protein localises to the nucleus. In terms of biological role, the TFIID basal transcription factor complex plays a major role in the initiation of RNA polymerase II (Pol II)-dependent transcription. TFIID recognizes and binds promoters via its subunit tbp-1, a TATA-box-binding protein, and promotes assembly of the pre-initiation complex (PIC). The TFIID complex consists of tbp-1 and TBP-associated factors (TAFs), including taf-10. Essential for early embryonic development, but not required for transcription of some genes; probably acts via activating transcription initiation by RNA Pol II, as part of the TFIID complex. This chain is Transcription initiation factor TFIID subunit 10, found in Caenorhabditis elegans.